The chain runs to 59 residues: U-actitoxin-Aer2a (59 aa).

Post-translationally, contains 5 disulfide bonds.

It is found in the secreted. The protein localises to the nematocyst. In Anemonia erythraea (Sea anemone), this protein is U-actitoxin-Aer2a.